The following is a 314-amino-acid chain: Nucleotide-binding protein CE1710 (314 aa).

A disordered region spans residues Met1–Thr29. Low complexity predominate over residues Ser7–Thr29. Gly37–Ser44 provides a ligand contact to ATP. GTP is bound at residue Asp88–Ser91.

Belongs to the RapZ-like family.

Functionally, displays ATPase and GTPase activities. In Corynebacterium efficiens (strain DSM 44549 / YS-314 / AJ 12310 / JCM 11189 / NBRC 100395), this protein is Nucleotide-binding protein CE1710.